Reading from the N-terminus, the 350-residue chain is MGVTELGKLIPDNLRRRVSLEQLNGKLIALDAYNALYQFLASIRQPDGTPLMDSQGRVTSHLSGLLYRTINLLEYGIKPVYVFDGKPPELKLIEIEKRRRVREKAVEDWIKAVEEGKKSEARKYAQRALFITSDMVDEAKRLLDSMGVPWVQAPSEGEAQAAYMASKGIVWAAGSQDYDSFLFGAPRLVRNLTISGRRKLPGRDEYVEVTPELIELNDVLKALRLRDRGQLIDLAILLGTDYNPEGIPGIGPQRALRLIQEYGSLDKLMNTVLKNAQFPVDPFKIREFFLNPPVTQEVNVKFKEPNEDEVVRLLVEEHDFSQDRVKNALERLRKSMGKAKGSTTLDSFFG.

Residues 1–102 form an N-domain region; it reads MGVTELGKLI…IEIEKRRRVR (102 aa). Mg(2+) is bound by residues D31, D84, E156, E158, D177, D179, and D241. Residues 120-263 form an I-domain region; the sequence is EARKYAQRAL…RALRLIQEYG (144 aa).

It belongs to the XPG/RAD2 endonuclease family. FEN1 subfamily. As to quaternary structure, interacts with PCNA. PCNA stimulates the nuclease activity without altering cleavage specificity. Requires Mg(2+) as cofactor.

In terms of biological role, structure-specific nuclease with 5'-flap endonuclease and 5'-3' exonuclease activities involved in DNA replication and repair. During DNA replication, cleaves the 5'-overhanging flap structure that is generated by displacement synthesis when DNA polymerase encounters the 5'-end of a downstream Okazaki fragment. Binds the unpaired 3'-DNA end and kinks the DNA to facilitate 5' cleavage specificity. Cleaves one nucleotide into the double-stranded DNA from the junction in flap DNA, leaving a nick for ligation. Also involved in the base excision repair (BER) pathway. Acts as a genome stabilization factor that prevents flaps from equilibrating into structures that lead to duplications and deletions. Also possesses 5'-3' exonuclease activity on nicked or gapped double-stranded DNA. This chain is Flap endonuclease 1, found in Caldivirga maquilingensis (strain ATCC 700844 / DSM 13496 / JCM 10307 / IC-167).